A 396-amino-acid polypeptide reads, in one-letter code: Inositol hexakisphosphate kinase 3 (396 aa).

206–214 is a substrate binding site; sequence PCILDLKMG.

Belongs to the inositol phosphokinase (IPK) family. As to expression, highly expressed in cerebellum, brain cortex, kidney, thymus and lung. Detected at lower levels in hippocampus, testis, heart and olfactory bulb.

It localises to the cytoplasm. The enzyme catalyses 1D-myo-inositol hexakisphosphate + ATP = 5-diphospho-1D-myo-inositol 1,2,3,4,6-pentakisphosphate + ADP. It carries out the reaction 1-diphospho-1D-myo-inositol 2,3,4,5,6-pentakisphosphate + ATP + H(+) = 1,5-bis(diphospho)-1D-myo-inositol 2,3,4,6-tetrakisphosphate + ADP. Its function is as follows. Converts inositol hexakisphosphate (InsP6) to diphosphoinositol pentakisphosphate (InsP7/PP-InsP5). Converts 1,3,4,5,6-pentakisphosphate (InsP5) to PP-InsP4. This chain is Inositol hexakisphosphate kinase 3 (Ip6k3), found in Mus musculus (Mouse).